The primary structure comprises 460 residues: Kynurenine 3-monooxygenase (460 aa).

This sequence belongs to the aromatic-ring hydroxylase family. KMO subfamily. FAD serves as cofactor.

The protein resides in the mitochondrion. The enzyme catalyses L-kynurenine + NADPH + O2 + H(+) = 3-hydroxy-L-kynurenine + NADP(+) + H2O. It participates in cofactor biosynthesis; NAD(+) biosynthesis; quinolinate from L-kynurenine: step 1/3. Functionally, catalyzes the hydroxylation of L-kynurenine (L-Kyn) to form 3-hydroxy-L-kynurenine (L-3OHKyn). Required for synthesis of quinolinic acid. The polypeptide is Kynurenine 3-monooxygenase (Dictyostelium discoideum (Social amoeba)).